Consider the following 95-residue polypeptide: MYAVTFDLDTNCLNENAVNLSKVYSDIRKFMEQHGFKWQQGSVYFGDETINAVTCVATVQILAKQIPSFAVCVKDVRMLKIEENNDLMPAIKIVL.

This sequence belongs to the VapD ribonuclease family. As to quaternary structure, homodimer.

Functionally, cleaves ssRNA, mostly between U:A. This is Endoribonuclease VapD homolog from Helicobacter pylori (strain ATCC 700392 / 26695) (Campylobacter pylori).